The sequence spans 204 residues: MVRRRPATGAAPRPHLAAVGRGLLLASVLAAAASSLPVAESSCPRDNSLVRDISRMQQRNYGREGFSHITVTGALAHGTKEVEVWLQTFGPGQRTPIHRHSCEEVFIVLKGKGTLLLGSSSLKYPGQPQEVPVFQNTTFSIPVNDPHQVWNSNEHEDLQVLVIISRPPVKIFIYDDWSMPHTAAKLKFPYFWDEDCLPAPKDEL.

Residues 1–41 form the signal peptide; sequence MVRRRPATGAAPRPHLAAVGRGLLLASVLAAAASSLPVAES. The cysteines at positions 43 and 196 are disulfide-linked. 3 residues coordinate Zn(2+): His98, His100, and Glu104. Residue Asn136 is glycosylated (N-linked (GlcNAc...) asparagine). Residue His147 coordinates Zn(2+). Positions 201 to 204 match the Prevents secretion from ER motif; sequence KDEL.

As to quaternary structure, homodimer.

The protein localises to the endoplasmic reticulum lumen. Its function is as follows. This is probably a receptor for the plant hormone auxin. In Zea mays (Maize), this protein is Auxin-binding protein 4 (ABP4).